Reading from the N-terminus, the 97-residue chain is Protein RADIALIS-like 6 (97 aa).

Residues 7–59 (SSISPWTFSQNKMFERALAVYDKDTPDRWHNVAKAVGGKTVEEVKRHYDILVE) enclose the SANT domain.

Expressed in the micropylar endosperm surrounding globular-stage embryos but no expression was detected elsewhere, including floral tissues.

It localises to the nucleus. Functionally, probable transcription factor. The polypeptide is Protein RADIALIS-like 6 (RL6) (Arabidopsis thaliana (Mouse-ear cress)).